Consider the following 65-residue polypeptide: Large ribosomal subunit protein uL29 (65 aa).

It belongs to the universal ribosomal protein uL29 family.

The chain is Large ribosomal subunit protein uL29 from Lactobacillus delbrueckii subsp. bulgaricus (strain ATCC 11842 / DSM 20081 / BCRC 10696 / JCM 1002 / NBRC 13953 / NCIMB 11778 / NCTC 12712 / WDCM 00102 / Lb 14).